The sequence spans 153 residues: Pheromone-binding protein Gp-9 (153 aa).

Residues 1-19 form the signal peptide; sequence MKTFVLHIFIFALVAFASA. 3 cysteine pairs are disulfide-bonded: Cys37-Cys77, Cys73-Cys129, and Cys118-Cys138.

The protein belongs to the PBP/GOBP family. Homodimer.

The protein localises to the secreted. Colony queen number, a major feature of social organization, is associated with worker genotype for Gp-9. Colonies are headed by either a single reproductive queen (monogyne form) or multiple queens (polygyne form). Differences in worker Gp-9 genotypes between social forms may cause differences in workers' abilities to recognize queens and regulate their numbers. In Solenopsis sp. (strain B0-153) (Fire ant), this protein is Pheromone-binding protein Gp-9.